The sequence spans 664 residues: Intraflagellar transport protein 70A1 (664 aa).

TPR repeat units lie at residues 11-44 (DGEFTAVVYRLIRDSRYSEAVQLLSAELQRSSRS), 45-78 (RAGLSLLAYCYYRLQEFELAAECYEQLSQMHPEL), 153-186 (PDGLVNMGCLLYKEGHYEAACSKFLAALQASGYQ), 188-220 (DLSYNLALAYYSSRQYAPALKHIADIIERGIRQ), 393-423 (TKQVQEARHNRDDEIIKKAMNEYDETLEKYI), 424-456 (PVLMAQAKIYWNLENYPMVEKIFRKSVEFCNDH), and 458-491 (VWKLNVAHVLFMQENKYKEAIGFYEPIVKKNYDN). Residues 507 to 534 (YIMTSQNEEAEELMRKIEKEEEQLSYGD) adopt a coiled-coil conformation. Residues 543–576 (CIVNLVIGTLYCAKGNYDFGISRVIKSLEPYHKK) form a TPR 8 repeat.

It belongs to the TTC30/dfy-1/fleer family. In terms of assembly, interacts wit the IFT B complex component IFT52.

The protein resides in the cell projection. It is found in the cilium. Its function is as follows. Required for polyglutamylation of axonemal tubulin. Plays a role in anterograde intraflagellar transport (IFT), the process by which cilia precursors are transported from the base of the cilium to the site of their incorporation at the tip. This chain is Intraflagellar transport protein 70A1 (Ift70a1), found in Mus musculus (Mouse).